We begin with the raw amino-acid sequence, 89 residues long: MSITVEEKARLIKEYATKEGDTGSPEVQVAILSSRIATLTEHFKSHKKDNHSRRGLLMMVAQRRKLLDYLKKKEEARYTALIARLGLRR.

It belongs to the universal ribosomal protein uS15 family. In terms of assembly, part of the 30S ribosomal subunit. Forms a bridge to the 50S subunit in the 70S ribosome, contacting the 23S rRNA.

In terms of biological role, one of the primary rRNA binding proteins, it binds directly to 16S rRNA where it helps nucleate assembly of the platform of the 30S subunit by binding and bridging several RNA helices of the 16S rRNA. Forms an intersubunit bridge (bridge B4) with the 23S rRNA of the 50S subunit in the ribosome. This Cereibacter sphaeroides (strain ATCC 17025 / ATH 2.4.3) (Rhodobacter sphaeroides) protein is Small ribosomal subunit protein uS15.